Reading from the N-terminus, the 380-residue chain is UPF0754 membrane protein Bsph_0374 (380 aa).

2 consecutive transmembrane segments (helical) span residues 1-21 (MDNFIVTLLFMAIIGAAIGGV) and 357-377 (MITVLGAVLGGLIGIVQGLIV).

Belongs to the UPF0754 family.

Its subcellular location is the cell membrane. This Lysinibacillus sphaericus (strain C3-41) protein is UPF0754 membrane protein Bsph_0374.